The sequence spans 250 residues: Global transcriptional regulator CodY (250 aa).

Residues 1–147 (MSTLLEKTRK…GATVVGLEIL (147 aa)) are GAF domain. Positions 195–214 (ASKIADKVGITRSVIVNALR) form a DNA-binding region, H-T-H motif.

The protein belongs to the CodY family.

It is found in the cytoplasm. Functionally, DNA-binding global transcriptional regulator which is involved in the adaptive response to starvation and acts by directly or indirectly controlling the expression of numerous genes in response to nutrient availability. During rapid exponential growth, CodY is highly active and represses genes whose products allow adaptation to nutrient depletion. This Thermoanaerobacter sp. (strain X514) protein is Global transcriptional regulator CodY.